A 1693-amino-acid chain; its full sequence is Latrophilin Cirl (1693 aa).

Residues 1–774 (MVLQGAKQRL…LFTMFDGNMR (774 aa)) are Extracellular-facing. Residues 30–119 (ACEGKKLTIE…KYLEAHYQCV (90 aa)) form the SUEL-type lectin domain. Residues N147, N260, N306, and N345 are each glycosylated (N-linked (GlcNAc...) asparagine). The segment at 190–309 (PPATHATPPG…GPSVSSNGSA (120 aa)) is disordered. Polar residues-rich tracts occupy residues 259 to 269 (SNATAPSNTRI) and 287 to 309 (KSSPNRTPGTAASGPSVSSNGSA). The segment at 379-406 (SFDEDDEEMAGTSTTTPMSTSGDCLHNS) is disordered. Over residues 390-399 (TSTTTPMSTS) the composition is skewed to low complexity. 4 N-linked (GlcNAc...) asparagine glycosylation sites follow: N405, N662, N710, and N737. Residues 568–761 (RSVVQKVKNI…AILMDVVDEH (194 aa)) enclose the GAIN-B domain. 2 disulfide bridges follow: C716–C743 and C731–C745. The tract at residues 716 to 761 (CVFWNYIDHAWSANGCSLESTNRTHSVCSCNHLTNFAILMDVVDEH) is GPS. Residues 775-795 (IFIYISIAICVVFIVIALLTL) traverse the membrane as a helical segment. Residues 796 to 808 (KLFNGVFVKSART) lie on the Cytoplasmic side of the membrane. A helical membrane pass occupies residues 809–829 (SIYINIYICLLAIELLFLLGI). At 830 to 835 (EQTETS) the chain is on the extracellular side. A helical membrane pass occupies residues 836 to 856 (IFCGFITVFLHCAILSGTSWF). Topologically, residues 857-882 (CYEAFHSYSTLTSDELLLEVDQTPKV) are cytoplasmic. A helical transmembrane segment spans residues 883–903 (NCYYLLSYGLSLSVVAISLVI). Over 904-927 (NPSTYTQNDYCVLMEANAVFYATF) the chain is Extracellular. Residues 928-948 (VAPVLIFFMAAIGYTFLSWII) traverse the membrane as a helical segment. Residues 949–975 (MCRKSRTGLKTKEHTRLATVRFDIRCS) are Cytoplasmic-facing. Residues 976–996 (FVFFLLLSAVWCSAYFYLRGA) form a helical membrane-spanning segment. Residues 997–1003 (KMDEDVT) are Extracellular-facing. The chain crosses the membrane as a helical span at residues 1004-1024 (GIYGYNFICFNTLLGLYIFVF). Topologically, residues 1025–1693 (HCIQNEKIRR…VRCYLEPLAK (669 aa)) are cytoplasmic. Residues 1089–1109 (PLGTNDDAHDEQQQQQHMSAT) are disordered. Phosphoserine is present on residues S1165, S1256, and S1263. Disordered stretches follow at residues 1237–1264 (KPNSQHGKKKRGGVGAIPASPSGSLHSR), 1279–1362 (KTKP…APPP), 1450–1529 (SRYG…LPPQ), and 1596–1678 (SMRG…SAML). Over residues 1307 to 1323 (QQQQQLRQQRQQQQQQL) the composition is skewed to low complexity. 2 positions are modified to phosphoserine: S1324 and S1325. Positions 1337–1357 (LHLQHQQQQQQQRRAGGQQQL) are enriched in low complexity. Residues 1464–1475 (RNQQQQQHSLAQ) are compositionally biased toward polar residues. Acidic residues-rich tracts occupy residues 1485-1498 (DEDDDEDEDDEETT) and 1508-1521 (CDEEEEDEESDMED). Positions 1640 to 1663 (QQLQKLSPQSTTSSSSHTSHSNPH) are enriched in low complexity.

This sequence belongs to the G-protein coupled receptor 2 family. LN-TM7 subfamily. As to quaternary structure, forms a heterodimer, consisting of a large extracellular region non-covalently linked to a seven-transmembrane moiety. Proteolytically cleaved into 2 subunits, an extracellular subunit and a seven-transmembrane subunit.

It is found in the cell membrane. The chain is Latrophilin Cirl from Drosophila pseudoobscura pseudoobscura (Fruit fly).